The chain runs to 441 residues: MQTELTFEQLENFSRKWRENPDKLVFQASIMKNGIKAATENPTSKVSIQPVFSHEVATDKVSNQQQSGRCWMFAALNTFRHKLNGTLGLKDFELSQNYTNFWDKLEKANYFLENIIETASEDEDSRLVSWLLDTPQQDGGQWDMLVSIIEKYGVVPKSAMPETFQSGKSADLNHLLNERLRTDAVILRKAFTEKKDTAGLKEEMLAEIYQLLVMTLGEPPKVFDFEYRNKDNEFKQELQITPKDFYERYVDMDLKNYIPLINAPTKDKPFNQAFTVDYLGNIVNGTPIKYLNVEMDVLKKAATDQIKDGETVWFGCDVGQLSEKTTGIMDTDIFLLNQTFGFKTAMTKAERLDYKHSMLTHAMVLTGVNVANGEVNRWKVENSWGEKIGNNGYFVASDAWMDEFTFQVVVHKKYLSKELIEAFNQEPIALKPWDPMGSLAL.

Residues Cys-70, His-361, and Asn-382 contribute to the active site.

The protein belongs to the peptidase C1 family.

The enzyme catalyses Inactivates bleomycin B2 (a cytotoxic glycometallopeptide) by hydrolysis of a carboxyamide bond of beta-aminoalanine, but also shows general aminopeptidase activity. The specificity varies somewhat with source, but amino acid arylamides of Met, Leu and Ala are preferred.. The protein is Aminopeptidase C (pepC) of Listeria monocytogenes serovar 1/2a (strain ATCC BAA-679 / EGD-e).